A 462-amino-acid polypeptide reads, in one-letter code: Asparagine--tRNA ligase (462 aa).

This sequence belongs to the class-II aminoacyl-tRNA synthetase family. In terms of assembly, homodimer.

The protein resides in the cytoplasm. The enzyme catalyses tRNA(Asn) + L-asparagine + ATP = L-asparaginyl-tRNA(Asn) + AMP + diphosphate + H(+). In Synechocystis sp. (strain ATCC 27184 / PCC 6803 / Kazusa), this protein is Asparagine--tRNA ligase.